The primary structure comprises 427 residues: Peptidyl-prolyl cis-trans isomerase sig-7 (427 aa).

The region spanning 6–161 is the PPIase cyclophilin-type domain; the sequence is ETTLGDLIID…KDIRISHTIV (156 aa). The stretch at 195 to 227 forms a coiled coil; the sequence is DEKEDEDEGKTAEEIAEELQQREMAEQAQILEM. Positions 241–319 constitute an RRM domain; that stretch reads NVLFVCKLNP…RRIHVDFSQS (79 aa). Residues 322 to 334 are compositionally biased toward polar residues; sequence QNYKYKPKSQQQE. The tract at residues 322–427 is disordered; the sequence is QNYKYKPKSQ…RSPDRRRDRR (106 aa). Over residues 351-370 the composition is skewed to basic residues; the sequence is SHQRSPSPRRRRSPSPKKDK. Over residues 384 to 427 the composition is skewed to basic and acidic residues; the sequence is SSDNHRDRDRSYRDNNRDRRDNHRDSDRDRRRHDRSPDRRRDRR.

The protein belongs to the cyclophilin-type PPIase family. PPIL4 subfamily. As to quaternary structure, interacts with ama-1, the catalytic subunit of the RNA polymerase II (RNA pol II) complex. As to expression, ubiquitous.

It localises to the nucleus. It is found in the nucleoplasm. Its subcellular location is the chromosome. It carries out the reaction [protein]-peptidylproline (omega=180) = [protein]-peptidylproline (omega=0). Its function is as follows. Probable PPIase that accelerates the folding of proteins. It catalyzes the cis-trans isomerization of proline imidic peptide bonds in oligopeptides. Involved in RNA polymerase II (RNA pol II)-mediated transcription elongation, and in primary transcript splicing, including co-transcriptional trans-splicing, in association with the catalytic subunit of the RNA pol II complex ama-1. Also plays a role in the regulation of elongation-dependent phosphorylation of ama-1 to control transcription. Involved in the transcription of several genes during embryogenesis and in particular, of genes related to developmental processes such as gastrulation, and also regulates transcription in germ cells from embryogenesis to adulthood. The sequence is that of Peptidyl-prolyl cis-trans isomerase sig-7 from Caenorhabditis elegans.